A 515-amino-acid polypeptide reads, in one-letter code: Protein translocase subunit SecD (515 aa).

Helical transmembrane passes span 5-25 (LIAK…LATP), 353-373 (KGIL…VAYY), 375-395 (LSGL…MGLL), 398-418 (FGAT…GIAV), 450-470 (FSTI…LFQF), and 477-497 (GFAV…ILCT).

It belongs to the SecD/SecF family. SecD subfamily. In terms of assembly, forms a complex with SecF. Part of the essential Sec protein translocation apparatus which comprises SecA, SecYEG and auxiliary proteins SecDF. Other proteins may also be involved.

It is found in the cell inner membrane. Its function is as follows. Part of the Sec protein translocase complex. Interacts with the SecYEG preprotein conducting channel. SecDF uses the proton motive force (PMF) to complete protein translocation after the ATP-dependent function of SecA. The polypeptide is Protein translocase subunit SecD (Desulfurispirillum indicum (strain ATCC BAA-1389 / DSM 22839 / S5)).